The sequence spans 339 residues: MFITTWCSNDAPDSSVPRTRSKTKFTPKVRDLLFHCRYEIVDIVDEGYDMPASIGFYNDIIREFVTDDFCLTSLFEDNGQDSNNIQHRNDGCIWSIFDRLMNTNKFRDFDVIQGTFDTLQIIFFTNHESANNFIKNNLPRFMQTLHKLIACSNFFIQAKSFKFLNELFTAQTNYETRSLWMAEPAFIKLVVLAIQSNKHAVRSRAVSILEIFIRNPRNSPEVHEFIGRNRNVLIAFFFNSAPIHYYQGSPNEKEDAQYARMAYKLLNWDMQRPFTQEQLQDFEEGWTHQKKMREEQLVRTCFHDNNPRLPKVNHVYRTRIIPNQQFLREPLKFGNPFRQ.

It belongs to the Mo25 family.

In Caenorhabditis elegans, this protein is MO25-like protein 3 (mop-25.3).